The following is a 428-amino-acid chain: Glutamate-1-semialdehyde 2,1-aminomutase 1 (428 aa).

Lysine 267 carries the post-translational modification N6-(pyridoxal phosphate)lysine.

It belongs to the class-III pyridoxal-phosphate-dependent aminotransferase family. HemL subfamily. Homodimer. The cofactor is pyridoxal 5'-phosphate.

Its subcellular location is the cytoplasm. The catalysed reaction is (S)-4-amino-5-oxopentanoate = 5-aminolevulinate. It participates in porphyrin-containing compound metabolism; protoporphyrin-IX biosynthesis; 5-aminolevulinate from L-glutamyl-tRNA(Glu): step 2/2. The polypeptide is Glutamate-1-semialdehyde 2,1-aminomutase 1 (Staphylococcus aureus (strain bovine RF122 / ET3-1)).